A 422-amino-acid chain; its full sequence is DNA (cytosine-5)-methyltransferase 3-like (422 aa).

The segment covering 1–11 (MGSRETPSSCS) has biased composition (polar residues). Positions 1-50 (MGSRETPSSCSKTHETLNLETPESSSTDPDSPLEEQWPKSAPDLKEEDSM) are disordered. Residues 20–30 (ETPESSSTDPD) show a composition bias toward low complexity. One can recognise an ADD domain in the interval 76–208 (EVNVNQRNIE…LKAFHDREGA (133 aa)). The segment at 87 to 117 (ICLCCGSLQVYAQHPLFEGGICAPCKDKFLE) adopts a GATA-type; atypical zinc-finger fold. The PHD-type; atypical zinc-finger motif lies at 128 to 184 (QSYCTICCSGHTLFICESPDCTRCYCFECVDILVGPGTSERINAMACWVCFLCLPFS).

Homodimer. Heterotetramer composed of 1 DNMT3A homodimer and 2 DNMT3L subunits (DNMT3L-DNMT3A-DNMT3A-DNMT3L). Interacts with histone H3 (via N-terminus); interaction is strongly inhibited by methylation at lysine 4 (H3K4me). Interacts with EZH2; the interaction is direct. Interacts with SPOCD1.

Its subcellular location is the nucleus. Functionally, catalytically inactive regulatory factor of DNA methyltransferases that can either promote or inhibit DNA methylation depending on the context. Essential for the function of DNMT3A and DNMT3B: activates DNMT3A and DNMT3B by binding to their catalytic domain. Acts by accelerating the binding of DNA and S-adenosyl-L-methionine (AdoMet) to the methyltransferases and dissociates from the complex after DNA binding to the methyltransferases. Recognizes unmethylated histone H3 lysine 4 (H3K4me0) and induces de novo DNA methylation by recruitment or activation of DNMT3. Plays a key role in embryonic stem cells and germ cells. In germ cells, required for the methylation of imprinted loci together with DNMT3A. In male germ cells, specifically required to methylate retrotransposons, preventing their mobilization. Plays a key role in embryonic stem cells (ESCs) by acting both as an positive and negative regulator of DNA methylation. While it promotes DNA methylation of housekeeping genes together with DNMT3A and DNMT3B, it also acts as an inhibitor of DNA methylation at the promoter of bivalent genes. Interacts with the EZH2 component of the PRC2/EED-EZH2 complex, preventing interaction of DNMT3A and DNMT3B with the PRC2/EED-EZH2 complex, leading to maintain low methylation levels at the promoters of bivalent genes. Promotes differentiation of ESCs into primordial germ cells by inhibiting DNA methylation at the promoter of RHOX5, thereby activating its expression. In Rattus norvegicus (Rat), this protein is DNA (cytosine-5)-methyltransferase 3-like (Dnmt3l).